The following is a 580-amino-acid chain: Glutamine--tRNA ligase (580 aa).

The 'HIGH' region motif lies at 41 to 51 (PEPNGYLHIGH). Residues 42-44 (EPN) and 48-54 (HIGHAKA) each bind ATP. L-glutamine-binding residues include Asp74 and Tyr218. Residues Thr237, 285–286 (RL), and 293–295 (MSK) each bind ATP. A 'KMSKS' region motif is present at residues 292-296 (VMSKR).

Belongs to the class-I aminoacyl-tRNA synthetase family. Monomer.

It is found in the cytoplasm. The enzyme catalyses tRNA(Gln) + L-glutamine + ATP = L-glutaminyl-tRNA(Gln) + AMP + diphosphate. The polypeptide is Glutamine--tRNA ligase (Xylella fastidiosa (strain 9a5c)).